The chain runs to 317 residues: MPNLKSIRDRISTVKNTKKITEAMRLVAAAKVRRAQEQVTATRPFADRLAQVLYGLQARLKFEEVELPLLQERALRKVCLLVVTGDRGLCGAYNSSVIKRAEERSNELKAKGIDYTFVLVGRKAIQYFQRRDQPIEATYGGLEQIPTAQEASEIADELLSLYLSEEVDHVELIYTRFISLVNSRPVVQTLLPLDPDALVVAEEDEVFRLTTRGGQFQVERERMERGTPQEMPSDMIFEQNPIQILDALLPLYLNNQLLRALQESAASELAARMTAMNNASDNASELIGTLTLSYNKARQAAITQELLEVVGGAEALN.

The protein belongs to the ATPase gamma chain family. As to quaternary structure, F-type ATPases have 2 components, CF(1) - the catalytic core - and CF(0) - the membrane proton channel. CF(1) has five subunits: alpha(3), beta(3), gamma(1), delta(1), epsilon(1). CF(0) has three main subunits: a, b and c.

It localises to the cellular thylakoid membrane. Produces ATP from ADP in the presence of a proton gradient across the membrane. The gamma chain is believed to be important in regulating ATPase activity and the flow of protons through the CF(0) complex. This Acaryochloris marina (strain MBIC 11017) protein is ATP synthase gamma chain.